The following is a 250-amino-acid chain: 2,3-bisphosphoglycerate-dependent phosphoglycerate mutase (250 aa).

Residues 10 to 17 (RHGESQWN), 23 to 24 (TG), R62, 89 to 92 (ERHY), K100, 116 to 117 (RR), and 185 to 186 (GN) contribute to the substrate site. The Tele-phosphohistidine intermediate role is filled by H11. The active-site Proton donor/acceptor is E89.

This sequence belongs to the phosphoglycerate mutase family. BPG-dependent PGAM subfamily. In terms of assembly, homodimer.

It catalyses the reaction (2R)-2-phosphoglycerate = (2R)-3-phosphoglycerate. It functions in the pathway carbohydrate degradation; glycolysis; pyruvate from D-glyceraldehyde 3-phosphate: step 3/5. Catalyzes the interconversion of 2-phosphoglycerate and 3-phosphoglycerate. This chain is 2,3-bisphosphoglycerate-dependent phosphoglycerate mutase, found in Klebsiella pneumoniae (strain 342).